A 267-amino-acid chain; its full sequence is Sorbitol-6-phosphate 2-dehydrogenase (267 aa).

9 to 38 (DNVIIVTGGASGIGLAIVDELLSQGAHVQM) serves as a coordination point for NAD(+). Position 147 (Ser147) interacts with substrate. The active-site Proton acceptor is the Tyr160.

The protein belongs to the short-chain dehydrogenases/reductases (SDR) family. As to quaternary structure, homotetramer.

It catalyses the reaction D-sorbitol 6-phosphate + NAD(+) = beta-D-fructose 6-phosphate + NADH + H(+). Its pathway is carbohydrate metabolism; D-sorbitol degradation; D-fructose 6-phosphate from D-sorbitol 6-phosphate: step 1/1. This chain is Sorbitol-6-phosphate 2-dehydrogenase (sorD), found in Klebsiella pneumoniae.